The chain runs to 580 residues: Pescadillo homolog (580 aa).

Over residues 291–303 (EPEEENEVDEFPA) the composition is skewed to acidic residues. Residues 291–321 (EPEEENEVDEFPADPENAGQEEEQKKQLQEE) form a disordered region. A compositionally biased stretch (basic and acidic residues) spans 312–321 (EEQKKQLQEE). The region spanning 323–416 (KHKSMFVGLK…MLLPVEDYFP (94 aa)) is the BRCT domain. Residues 448–496 (KGENPEDDDDDDEEDDEDEEEDDEDEDDEENEEEEEDKKLRHLENKKVG) form a disordered region. Residues 452–483 (PEDDDDDDEEDDEDEEEDDEDEDDEENEEEEE) show a composition bias toward acidic residues. Basic and acidic residues predominate over residues 484–494 (DKKLRHLENKK).

It belongs to the pescadillo family. Component of the PeBoW complex, composed of bop1, pes1 and wdr12. The complex is held together by bop1, which interacts with pes1 via its N-terminal domain and with wdr12 via a high-affinity interaction between the seven-bladed beta-propeller domains of the 2 proteins. The PeBoW complex associates with the 66S pre-ribosome.

It is found in the nucleus. It localises to the nucleolus. Its subcellular location is the nucleoplasm. Functionally, component of the PeBoW complex, which is required for maturation of 28S and 5.8S ribosomal RNAs and formation of the 60S ribosome. This is Pescadillo homolog (pes1) from Xenopus tropicalis (Western clawed frog).